Here is a 293-residue protein sequence, read N- to C-terminus: 4-diphosphocytidyl-2-C-methyl-D-erythritol kinase (293 aa).

Lys-11 is an active-site residue. Position 96–106 (96–106) interacts with ATP; sequence PVAAGLGGGSS. Asp-138 is an active-site residue.

The protein belongs to the GHMP kinase family. IspE subfamily.

The enzyme catalyses 4-CDP-2-C-methyl-D-erythritol + ATP = 4-CDP-2-C-methyl-D-erythritol 2-phosphate + ADP + H(+). It participates in isoprenoid biosynthesis; isopentenyl diphosphate biosynthesis via DXP pathway; isopentenyl diphosphate from 1-deoxy-D-xylulose 5-phosphate: step 3/6. In terms of biological role, catalyzes the phosphorylation of the position 2 hydroxy group of 4-diphosphocytidyl-2C-methyl-D-erythritol. The polypeptide is 4-diphosphocytidyl-2-C-methyl-D-erythritol kinase (Xanthobacter autotrophicus (strain ATCC BAA-1158 / Py2)).